We begin with the raw amino-acid sequence, 370 residues long: 4-hydroxy-3-methylbut-2-en-1-yl diphosphate synthase (flavodoxin) (370 aa).

Residues Cys270, Cys273, Cys305, and Glu312 each contribute to the [4Fe-4S] cluster site.

It belongs to the IspG family. It depends on [4Fe-4S] cluster as a cofactor.

It catalyses the reaction (2E)-4-hydroxy-3-methylbut-2-enyl diphosphate + oxidized [flavodoxin] + H2O + 2 H(+) = 2-C-methyl-D-erythritol 2,4-cyclic diphosphate + reduced [flavodoxin]. The protein operates within isoprenoid biosynthesis; isopentenyl diphosphate biosynthesis via DXP pathway; isopentenyl diphosphate from 1-deoxy-D-xylulose 5-phosphate: step 5/6. Functionally, converts 2C-methyl-D-erythritol 2,4-cyclodiphosphate (ME-2,4cPP) into 1-hydroxy-2-methyl-2-(E)-butenyl 4-diphosphate. The chain is 4-hydroxy-3-methylbut-2-en-1-yl diphosphate synthase (flavodoxin) from Hahella chejuensis (strain KCTC 2396).